The following is a 226-amino-acid chain: UPF0173 metal-dependent hydrolase CTN_1413 (226 aa).

It belongs to the UPF0173 family.

The protein is UPF0173 metal-dependent hydrolase CTN_1413 of Thermotoga neapolitana (strain ATCC 49049 / DSM 4359 / NBRC 107923 / NS-E).